The sequence spans 546 residues: Chaperonin GroEL 4 (546 aa).

ATP contacts are provided by residues 30-33, Lys-51, 87-91, Gly-415, and Asp-495; these read TLGP and DGTTT. A disordered region spans residues 524–546; it reads APKDTPAAGQPGGPGAGGPGLDF. Over residues 533–546 the composition is skewed to gly residues; sequence QPGGPGAGGPGLDF.

Belongs to the chaperonin (HSP60) family. In terms of assembly, forms a cylinder of 14 subunits composed of two heptameric rings stacked back-to-back. Interacts with the co-chaperonin GroES.

The protein resides in the cytoplasm. The catalysed reaction is ATP + H2O + a folded polypeptide = ADP + phosphate + an unfolded polypeptide.. Together with its co-chaperonin GroES, plays an essential role in assisting protein folding. The GroEL-GroES system forms a nano-cage that allows encapsulation of the non-native substrate proteins and provides a physical environment optimized to promote and accelerate protein folding. The sequence is that of Chaperonin GroEL 4 from Paraburkholderia xenovorans (strain LB400).